A 271-amino-acid chain; its full sequence is Tryptophan synthase alpha chain (271 aa).

Residues Glu-49 and Asp-60 each act as proton acceptor in the active site.

It belongs to the TrpA family. In terms of assembly, tetramer of two alpha and two beta chains.

It carries out the reaction (1S,2R)-1-C-(indol-3-yl)glycerol 3-phosphate + L-serine = D-glyceraldehyde 3-phosphate + L-tryptophan + H2O. It functions in the pathway amino-acid biosynthesis; L-tryptophan biosynthesis; L-tryptophan from chorismate: step 5/5. The alpha subunit is responsible for the aldol cleavage of indoleglycerol phosphate to indole and glyceraldehyde 3-phosphate. This is Tryptophan synthase alpha chain from Blochmanniella floridana.